The chain runs to 346 residues: MSYKIVALPGDGIGPEILNGSLEILQQLSKEFHFEYELESHDFGGIAIDNHGKPLPDSTLNACKNADAILLGAVGGPKWTDPNNRPEQGLLGIRKALGLFANIRPTTVTNGTSHLSPIKEERVANTDFILVRELTGGIYFGEPKQLSENDALDSLTYTRDEIERIARVGFELAQKRHKKLTSVDKENVLSSSKLWRNVINEVSQSYPDVEVNHLLVDACAMHLITNPSQFDVIVTENLFGDILSDEASVIPGSLGLSPSASFSEQGPRLYEPIHGSAPDIANQDIANPFGMLLSVAMCLRESLNEDKAADKLENVIYQLIKEGKTTRDLNGNYLTSEIFNYVKENL.

Glycine 76–glutamate 87 serves as a coordination point for NAD(+). Substrate contacts are provided by arginine 94, arginine 104, arginine 132, and aspartate 217. Aspartate 217, aspartate 241, and aspartate 245 together coordinate Mg(2+). Residue glycine 275–asparagine 287 coordinates NAD(+).

Belongs to the isocitrate and isopropylmalate dehydrogenases family. LeuB type 1 subfamily. In terms of assembly, homodimer. Mg(2+) serves as cofactor. The cofactor is Mn(2+).

It is found in the cytoplasm. It carries out the reaction (2R,3S)-3-isopropylmalate + NAD(+) = 4-methyl-2-oxopentanoate + CO2 + NADH. It participates in amino-acid biosynthesis; L-leucine biosynthesis; L-leucine from 3-methyl-2-oxobutanoate: step 3/4. Its function is as follows. Catalyzes the oxidation of 3-carboxy-2-hydroxy-4-methylpentanoate (3-isopropylmalate) to 3-carboxy-4-methyl-2-oxopentanoate. The product decarboxylates to 4-methyl-2 oxopentanoate. This chain is 3-isopropylmalate dehydrogenase, found in Staphylococcus saprophyticus subsp. saprophyticus (strain ATCC 15305 / DSM 20229 / NCIMB 8711 / NCTC 7292 / S-41).